The chain runs to 158 residues: Putative cTAGE family member 3 (158 aa).

A coiled-coil region spans residues Gln-26–Asp-96.

Belongs to the cTAGE family. Expressed in normal tissues including colon, mammary gland, ovary, placenta, stomach and testis, as well as several fetal tissues.

Its function is as follows. Tumor-associated antigen. The protein is Putative cTAGE family member 3 (CTAGE3P) of Homo sapiens (Human).